Consider the following 316-residue polypeptide: N-acetyl-gamma-glutamyl-phosphate reductase (316 aa).

Residue C136 is part of the active site.

This sequence belongs to the NAGSA dehydrogenase family. Type 1 subfamily.

It localises to the cytoplasm. It carries out the reaction N-acetyl-L-glutamate 5-semialdehyde + phosphate + NADP(+) = N-acetyl-L-glutamyl 5-phosphate + NADPH + H(+). It participates in amino-acid biosynthesis; L-arginine biosynthesis; N(2)-acetyl-L-ornithine from L-glutamate: step 3/4. Its function is as follows. Catalyzes the NADPH-dependent reduction of N-acetyl-5-glutamyl phosphate to yield N-acetyl-L-glutamate 5-semialdehyde. The polypeptide is N-acetyl-gamma-glutamyl-phosphate reductase (Xanthomonas axonopodis pv. citri (strain 306)).